A 158-amino-acid chain; its full sequence is Small ribosomal subunit protein uS17 (158 aa).

A2 carries the post-translational modification N-acetylalanine. Position 22 is a citrulline (R22). Residues K38, K45, and K58 each carry the N6-acetyllysine modification. C60 carries the S-palmitoyl cysteine lipid modification. The residue at position 67 (S67) is a Phosphoserine. Position 69 is an omega-N-methylarginine (R69). S110 bears the Phosphoserine mark.

This sequence belongs to the universal ribosomal protein uS17 family. As to quaternary structure, component of the small ribosomal subunit. Part of the small subunit (SSU) processome, composed of more than 70 proteins and the RNA chaperone small nucleolar RNA (snoRNA) U3. In terms of processing, citrullinated by PADI4.

Its subcellular location is the cytoplasm. It is found in the nucleus. The protein localises to the nucleolus. Functionally, component of the small ribosomal subunit. The ribosome is a large ribonucleoprotein complex responsible for the synthesis of proteins in the cell. Part of the small subunit (SSU) processome, first precursor of the small eukaryotic ribosomal subunit. During the assembly of the SSU processome in the nucleolus, many ribosome biogenesis factors, an RNA chaperone and ribosomal proteins associate with the nascent pre-rRNA and work in concert to generate RNA folding, modifications, rearrangements and cleavage as well as targeted degradation of pre-ribosomal RNA by the RNA exosome. The chain is Small ribosomal subunit protein uS17 (RPS11) from Canis lupus familiaris (Dog).